Consider the following 720-residue polypeptide: Asp/Glu-specific dipeptidyl-peptidase (720 aa).

An N-terminal signal peptide occupies residues 1–21 (MKKRLLLPLFAALCLSQIAHA). Cysteines 69 and 86 form a disulfide. Active-site charge relay system residues include His85, Asp227, and Ser655.

The protein belongs to the peptidase S46 family. In terms of assembly, homodimer.

The protein resides in the cell surface. Enzyme activity is completely blocked by diisopropyl-fluorophosphates, moderately by phenylmethylsulfonyl fluoride (PMSF) and 4-(2-methyl)benzenesulfonyl fluoride, and slightly by pepstatin in vitro. Functionally, catalyzes the removal of dipeptides from the N-terminus of oligopeptides. Shows a strict specificity for acidic residues (Asp or Glu) in the P1 position, and has a hydrophobic residue preference at the P2 position. Preferentially cleaves the synthetic substrate Leu-Asp-methylcoumaryl-7-amide (Leu-Asp-MCA) as compared to Leu-Glu-MCA. Is involved in amino acid metabolism and bacterial growth of asaccharolytic P.gingivalis, that utilizes amino acids from extracellular proteinaceous nutrients as energy and carbon sources. The chain is Asp/Glu-specific dipeptidyl-peptidase from Porphyromonas gingivalis (strain ATCC 33277 / DSM 20709 / CIP 103683 / JCM 12257 / NCTC 11834 / 2561).